A 411-amino-acid polypeptide reads, in one-letter code: Allantoate amidohydrolase (411 aa).

4 residues coordinate Zn(2+): histidine 81, aspartate 92, glutamate 127, and histidine 190. Residues arginine 215, asparagine 275, and arginine 288 each coordinate allantoate. Residue histidine 382 coordinates Zn(2+).

This sequence belongs to the peptidase M20 family. As to quaternary structure, homodimer. Zn(2+) serves as cofactor.

Its subcellular location is the cytoplasm. The catalysed reaction is allantoate + H2O + 2 H(+) = (S)-2-ureidoglycine + NH4(+) + CO2. It participates in nitrogen metabolism; (S)-allantoin degradation. With respect to regulation, sulfate could be an allosteric effector of the enzyme that is responsible for stabilizing substrate binding. In addition, this anion effector may act as a counterion during enzyme-mediated catalysis. Functionally, involved in the anaerobic nitrogen utilization via the assimilation of allantoin. Catalyzes specifically the hydrolysis of allantoate to yield CO2, NH3 and S-ureidoglycine, which is unstable and readily undergoes a second deamination by S-ureidoglycine aminohydrolase AllE to yield S-ureidoglycolate and NH3. In vivo, the spontaneous release of S-ureidoglycolate and ammonia from S-ureidoglycine appears to be too slow to sustain an efficient flux of nitrogen. In Escherichia coli (strain K12), this protein is Allantoate amidohydrolase.